The chain runs to 115 residues: Large ribosomal subunit protein bL19 (115 aa).

Belongs to the bacterial ribosomal protein bL19 family.

In terms of biological role, this protein is located at the 30S-50S ribosomal subunit interface and may play a role in the structure and function of the aminoacyl-tRNA binding site. In Fervidobacterium nodosum (strain ATCC 35602 / DSM 5306 / Rt17-B1), this protein is Large ribosomal subunit protein bL19.